The sequence spans 189 residues: Large ribosomal subunit protein eL14 (189 aa).

It belongs to the eukaryotic ribosomal protein eL14 family.

Component of the large ribosomal subunit. The ribosome is a large ribonucleoprotein complex responsible for the synthesis of proteins in the cell. The polypeptide is Large ribosomal subunit protein eL14 (Trypanosoma brucei brucei).